Here is a 370-residue protein sequence, read N- to C-terminus: Serine O-succinyltransferase (370 aa).

An AB hydrolase-1 domain is found at 46-355 (AILIVTGLSP…PQGHDAFLVD (310 aa)). The segment at 52–55 (GLSP) is important for substrate specificity. Residue serine 149 is the Nucleophile of the active site. Substrate is bound at residue arginine 218. Catalysis depends on residues aspartate 316 and histidine 349. Aspartate 350 provides a ligand contact to substrate.

Belongs to the AB hydrolase superfamily. MetX family. As to quaternary structure, homodimer.

It localises to the cytoplasm. The catalysed reaction is succinyl-CoA + L-serine = O-succinyl-L-serine + CoA. The enzyme catalyses L-homoserine + succinyl-CoA = O-succinyl-L-homoserine + CoA. It functions in the pathway amino-acid biosynthesis; L-cysteine biosynthesis; L-cysteine from L-serine: step 1/2. Transfers a succinyl group from succinyl-CoA to L-serine, forming succinyl-L-serine. In vitro, also has homoserine succinyl transferase activity. The sequence is that of Serine O-succinyltransferase from Stenotrophomonas maltophilia (Pseudomonas maltophilia).